The following is a 65-amino-acid chain: Gallinacin-1 alpha (65 aa).

Positions 1–19 are cleaved as a signal peptide; it reads MRIVYLLLPFILLLAQGAA. Positions 20–25 are excised as a propeptide; sequence GSSQAL. 3 disulfide bridges follow: Cys-31-Cys-59, Cys-38-Cys-53, and Cys-43-Cys-60.

The protein belongs to the beta-defensin family.

It is found in the secreted. The protein resides in the cytoplasmic granule. In terms of biological role, has bactericidal activity. Potent activity against E.coli ML-35, L.monocytogenes EGD and C.albicans. The protein is Gallinacin-1 alpha of Gallus gallus (Chicken).